We begin with the raw amino-acid sequence, 365 residues long: Aminomethyltransferase (365 aa).

The protein belongs to the GcvT family. In terms of assembly, the glycine cleavage system is composed of four proteins: P, T, L and H.

It catalyses the reaction N(6)-[(R)-S(8)-aminomethyldihydrolipoyl]-L-lysyl-[protein] + (6S)-5,6,7,8-tetrahydrofolate = N(6)-[(R)-dihydrolipoyl]-L-lysyl-[protein] + (6R)-5,10-methylene-5,6,7,8-tetrahydrofolate + NH4(+). Its function is as follows. The glycine cleavage system catalyzes the degradation of glycine. This is Aminomethyltransferase from Cronobacter sakazakii (strain ATCC BAA-894) (Enterobacter sakazakii).